Here is a 376-residue protein sequence, read N- to C-terminus: Sterol 24-C-methyltransferase (376 aa).

This sequence belongs to the class I-like SAM-binding methyltransferase superfamily. Erg6/SMT family.

The catalysed reaction is zymosterol + S-adenosyl-L-methionine = fecosterol + S-adenosyl-L-homocysteine + H(+). The protein operates within steroid metabolism; ergosterol biosynthesis; ergosterol from zymosterol: step 1/5. Its activity is regulated as follows. Substrate analogs 25-azalanosterol and 24(R,S),25-epiminolanosterol act as inhibitors. Functionally, sterol 24-C-methyltransferase; part of the third module of ergosterol biosynthesis pathway that includes the late steps of the pathway. ERG6 catalyzes the methyl transfer from S-adenosyl-methionine to the C-24 of zymosterol to form fecosterol. The third module or late pathway involves the ergosterol synthesis itself through consecutive reactions that mainly occur in the endoplasmic reticulum (ER) membrane. Firstly, the squalene synthase ERG9 catalyzes the condensation of 2 farnesyl pyrophosphate moieties to form squalene, which is the precursor of all steroids. Squalene synthase is crucial for balancing the incorporation of farnesyl diphosphate (FPP) into sterol and nonsterol isoprene synthesis. Secondly, the squalene epoxidase ERG1 catalyzes the stereospecific oxidation of squalene to (S)-2,3-epoxysqualene, which is considered to be a rate-limiting enzyme in steroid biosynthesis. Then, the lanosterol synthase ERG7 catalyzes the cyclization of (S)-2,3 oxidosqualene to lanosterol, a reaction that forms the sterol core. In the next steps, lanosterol is transformed to zymosterol through a complex process involving various demethylation, reduction and desaturation reactions. The lanosterol 14-alpha-demethylase ERG11 (also known as CYP51) catalyzes C14-demethylation of lanosterol to produce 4,4'-dimethyl cholesta-8,14,24-triene-3-beta-ol, which is critical for ergosterol biosynthesis. The C-14 reductase ERG24 reduces the C14=C15 double bond of 4,4-dimethyl-cholesta-8,14,24-trienol to produce 4,4-dimethyl-cholesta-8,24-dienol. 4,4-dimethyl-cholesta-8,24-dienol is substrate of the C-4 demethylation complex ERG25-ERG26-ERG27 in which ERG25 catalyzes the three-step monooxygenation required for the demethylation of 4,4-dimethyl and 4alpha-methylsterols, ERG26 catalyzes the oxidative decarboxylation that results in a reduction of the 3-beta-hydroxy group at the C-3 carbon to an oxo group, and ERG27 is responsible for the reduction of the keto group on the C-3. ERG28 has a role as a scaffold to help anchor ERG25, ERG26 and ERG27 to the endoplasmic reticulum and ERG29 regulates the activity of the iron-containing C4-methylsterol oxidase ERG25. Then, the sterol 24-C-methyltransferase ERG6 catalyzes the methyl transfer from S-adenosyl-methionine to the C-24 of zymosterol to form fecosterol. The C-8 sterol isomerase ERG2 catalyzes the reaction which results in unsaturation at C-7 in the B ring of sterols and thus converts fecosterol to episterol. The sterol-C5-desaturase ERG3 then catalyzes the introduction of a C-5 double bond in the B ring to produce 5-dehydroepisterol. The C-22 sterol desaturase ERG5 further converts 5-dehydroepisterol into ergosta-5,7,22,24(28)-tetraen-3beta-ol by forming the C-22(23) double bond in the sterol side chain. Finally, ergosta-5,7,22,24(28)-tetraen-3beta-ol is substrate of the C-24(28) sterol reductase ERG4 to produce ergosterol. This Candida albicans (strain SC5314 / ATCC MYA-2876) (Yeast) protein is Sterol 24-C-methyltransferase.